Reading from the N-terminus, the 488-residue chain is NADH-quinone oxidoreductase subunit N (488 aa).

Helical transmembrane passes span 15 to 35, 42 to 62, 79 to 99, 108 to 128, 133 to 153, 168 to 188, 209 to 229, 243 to 263, 277 to 297, 305 to 325, 333 to 353, 376 to 396, 409 to 429, and 456 to 476; these read LALP…VDLY, GMTF…AIVA, NLAA…FAYC, LLKG…MIMA, LMTV…MVAF, FVLG…IYGA, WLLL…FGAV, PTTV…ALFV, WQPM…LAAL, MLAY…IAGT, LFYA…IILL, MALM…TVGF, VGLV…AFYY, and GLLV…DSLI.

This sequence belongs to the complex I subunit 2 family. NDH-1 is composed of 14 different subunits. Subunits NuoA, H, J, K, L, M, N constitute the membrane sector of the complex.

It is found in the cell inner membrane. It carries out the reaction a quinone + NADH + 5 H(+)(in) = a quinol + NAD(+) + 4 H(+)(out). NDH-1 shuttles electrons from NADH, via FMN and iron-sulfur (Fe-S) centers, to quinones in the respiratory chain. The immediate electron acceptor for the enzyme in this species is believed to be ubiquinone. Couples the redox reaction to proton translocation (for every two electrons transferred, four hydrogen ions are translocated across the cytoplasmic membrane), and thus conserves the redox energy in a proton gradient. The sequence is that of NADH-quinone oxidoreductase subunit N from Alkalilimnicola ehrlichii (strain ATCC BAA-1101 / DSM 17681 / MLHE-1).